We begin with the raw amino-acid sequence, 283 residues long: Probable aquaporin NIP4-2 (283 aa).

N-acetylmethionine is present on M1. Residues 1–21 (MTSHGEEIEDEQISRIEKGNC) show a composition bias toward basic and acidic residues. Residues 1-23 (MTSHGEEIEDEQISRIEKGNCKD) form a disordered region. Helical transmembrane passes span 51–71 (GTYFIIFSGCGVVVVNVLYGG) and 77–97 (GICVTWGLIVMVMIYSTGHIS). Residues 102 to 104 (NPA) carry the NPA 1 motif. 3 helical membrane passes run 120-140 (VPLYIGAQLTGSLLASLTLRL), 161-181 (ALVAEIIISFLLMFVISGVAT), and 189-209 (LAGIAVGMTIILNVFVAGPIS). Positions 214-216 (NPA) match the NPA 2 motif. Residues 231 to 251 (IWVYIVGPFVGIFAGGFVYNF) traverse the membrane as a helical segment. S267 bears the Phosphoserine mark.

It belongs to the MIP/aquaporin (TC 1.A.8) family. NIP (TC 1.A.8.12) subfamily.

The protein resides in the membrane. Functionally, aquaporins facilitate the transport of water and small neutral solutes across cell membranes. This is Probable aquaporin NIP4-2 (NIP4-2) from Arabidopsis thaliana (Mouse-ear cress).